Consider the following 247-residue polypeptide: 5'-nucleotidase SurE (247 aa).

A divalent metal cation-binding residues include aspartate 8, aspartate 9, serine 39, and asparagine 91.

It belongs to the SurE nucleotidase family. A divalent metal cation serves as cofactor.

It localises to the cytoplasm. It catalyses the reaction a ribonucleoside 5'-phosphate + H2O = a ribonucleoside + phosphate. Nucleotidase that shows phosphatase activity on nucleoside 5'-monophosphates. In Azoarcus sp. (strain BH72), this protein is 5'-nucleotidase SurE.